We begin with the raw amino-acid sequence, 172 residues long: Large ribosomal subunit protein uL10 (172 aa).

Belongs to the universal ribosomal protein uL10 family. As to quaternary structure, part of the ribosomal stalk of the 50S ribosomal subunit. The N-terminus interacts with L11 and the large rRNA to form the base of the stalk. The C-terminus forms an elongated spine to which L12 dimers bind in a sequential fashion forming a multimeric L10(L12)X complex.

Functionally, forms part of the ribosomal stalk, playing a central role in the interaction of the ribosome with GTP-bound translation factors. This Rhizobium rhizogenes (strain K84 / ATCC BAA-868) (Agrobacterium radiobacter) protein is Large ribosomal subunit protein uL10.